Reading from the N-terminus, the 1026-residue chain is Contactin-4 (1026 aa).

A signal peptide spans 1–18 (MRLPWELLVLQSFMLCLA). Ig-like C2-type domains lie at 32-117 (PSHV…AKLQ), 122-206 (ENFK…HQVL), 225-311 (PKIE…GQVT), 316-400 (PNWV…AELS), 406-493 (PDFS…GNVV), and 497-586 (PTKV…DKLS). 6 disulfide bridges follow: C50-C100, C144-C194, C247-C295, C337-C384, C429-C477, and C519-C576. N65, N90, and N191 each carry an N-linked (GlcNAc...) asparagine glycan. N-linked (GlcNAc...) asparagine glycans are attached at residues N370, N375, and N466. Fibronectin type-III domains are found at residues 599–697 (PPEA…TEEA), 702–799 (TPAN…SAEE), 804–899 (PPAS…TRKP), and 900–995 (PPSQ…ISNS). Positions 685–710 (PSRPSEKRRTEEALPEVTPANVSGGG) are disordered. Over residues 687 to 696 (RPSEKRRTEE) the composition is skewed to basic and acidic residues. N-linked (GlcNAc...) asparagine glycans are attached at residues N705, N764, N858, N893, N911, N929, and N954. Residue S1000 is the site of GPI-anchor amidated serine attachment. The propeptide at 1001–1026 (GASTSNACTLSAISTIMISLTARSSL) is removed in mature form.

It belongs to the immunoglobulin superfamily. Contactin family. As to quaternary structure, interacts with PTPRG. Specifically expressed in the nervous system. Not expressed in heart, spleen, lung, liver, kidney or skeletal muscle. In the hippocampus, it is highly expressed in CA1 pyramidal cells and weakly expressed in other regions of the hippocampus.

The protein resides in the cell membrane. The protein localises to the secreted. Contactins mediate cell surface interactions during nervous system development. Has some neurite outgrowth-promoting activity. May be involved in synaptogenesis. The polypeptide is Contactin-4 (Cntn4) (Rattus norvegicus (Rat)).